Here is a 264-residue protein sequence, read N- to C-terminus: Cell division protein DivIB (264 aa).

At 1 to 23 (MAVYEERIPQVKQQRPRRRGNRK) the chain is on the cytoplasmic side. Residues 24-44 (LVFLLVLFFLTILIIVFIRSP) traverse the membrane as a helical segment. The Extracellular portion of the chain corresponds to 45-264 (YSKVQEIRVT…GQEQPQQPQQ (220 aa)). Residues 46 to 114 (SKVQEIRVTG…GLITLHITEQ (69 aa)) form the POTRA domain.

Belongs to the FtsQ/DivIB family. DivIB subfamily.

It is found in the cell membrane. In terms of biological role, cell division protein that may be involved in stabilizing or promoting the assembly of the division complex. This is Cell division protein DivIB from Brevibacillus brevis (strain 47 / JCM 6285 / NBRC 100599).